A 407-amino-acid chain; its full sequence is 1-deoxy-D-xylulose 5-phosphate reductoisomerase (407 aa).

Residues Thr25, Gly26, Ser27, Ile28, Asn53, and Asn136 each contribute to the NADPH site. Lys137 contributes to the 1-deoxy-D-xylulose 5-phosphate binding site. Residue Glu138 participates in NADPH binding. Residue Asp162 participates in Mn(2+) binding. 4 residues coordinate 1-deoxy-D-xylulose 5-phosphate: Ser163, Glu164, Ser188, and His211. Residue Glu164 participates in Mn(2+) binding. Gly217 serves as a coordination point for NADPH. Residues Ser224, Asn229, Lys230, and Glu233 each contribute to the 1-deoxy-D-xylulose 5-phosphate site. Residue Glu233 participates in Mn(2+) binding.

The protein belongs to the DXR family. Mg(2+) is required as a cofactor. Mn(2+) serves as cofactor.

It catalyses the reaction 2-C-methyl-D-erythritol 4-phosphate + NADP(+) = 1-deoxy-D-xylulose 5-phosphate + NADPH + H(+). The protein operates within isoprenoid biosynthesis; isopentenyl diphosphate biosynthesis via DXP pathway; isopentenyl diphosphate from 1-deoxy-D-xylulose 5-phosphate: step 1/6. Catalyzes the NADPH-dependent rearrangement and reduction of 1-deoxy-D-xylulose-5-phosphate (DXP) to 2-C-methyl-D-erythritol 4-phosphate (MEP). This Nitrobacter winogradskyi (strain ATCC 25391 / DSM 10237 / CIP 104748 / NCIMB 11846 / Nb-255) protein is 1-deoxy-D-xylulose 5-phosphate reductoisomerase.